The following is a 323-amino-acid chain: tRNA U34 carboxymethyltransferase (323 aa).

Carboxy-S-adenosyl-L-methionine is bound by residues Lys-91, Trp-105, Lys-110, Gly-130, 152 to 154, 181 to 182, Met-196, Tyr-200, and Arg-315; these read DPT and IE.

It belongs to the class I-like SAM-binding methyltransferase superfamily. CmoB family. In terms of assembly, homotetramer.

The enzyme catalyses carboxy-S-adenosyl-L-methionine + 5-hydroxyuridine(34) in tRNA = 5-carboxymethoxyuridine(34) in tRNA + S-adenosyl-L-homocysteine + H(+). Catalyzes carboxymethyl transfer from carboxy-S-adenosyl-L-methionine (Cx-SAM) to 5-hydroxyuridine (ho5U) to form 5-carboxymethoxyuridine (cmo5U) at position 34 in tRNAs. The protein is tRNA U34 carboxymethyltransferase of Salmonella typhi.